A 411-amino-acid chain; its full sequence is Small ribosomal subunit protein bS1c (411 aa).

The N-terminal 41 residues, 1 to 41, are a transit peptide targeting the chloroplast; it reads MASLAQQLAGGLRCPPLSNSNLSKPFSPKHTLKPRFSPIVS. 3 consecutive S1 motif domains span residues 96 to 166, 184 to 248, and 261 to 329; these read GSRV…LSLR, DVVV…MSNR, and GSVV…LSTK.

Belongs to the bacterial ribosomal protein bS1 family. In terms of assembly, component of the chloroplast small ribosomal subunit (SSU). Mature 70S chloroplast ribosomes of higher plants consist of a small (30S) and a large (50S) subunit. The 30S small subunit contains 1 molecule of ribosomal RNA (16S rRNA) and 24 different proteins. The 50S large subunit contains 3 rRNA molecules (23S, 5S and 4.5S rRNA) and 33 different proteins.

It localises to the plastid. Its subcellular location is the chloroplast. Component of the chloroplast ribosome (chloro-ribosome), a dedicated translation machinery responsible for the synthesis of chloroplast genome-encoded proteins, including proteins of the transcription and translation machinery and components of the photosynthetic apparatus. Actively engaged in the initiation complex formation via a strong mRNA-binding activity. Possesses a poly(A)-binding activity which might play a role as a control element in chloroplast mRNA translation. The protein is Small ribosomal subunit protein bS1c (RPS1) of Spinacia oleracea (Spinach).